The following is a 449-amino-acid chain: Biotin carboxylase (449 aa).

In terms of domain architecture, Biotin carboxylation spans 1–445; it reads MLDKIVIANR…NIHYLEKKLG (445 aa). ATP is bound by residues lysine 116, lysine 159, 165-166, 201-204, histidine 209, and histidine 236; these read GG and EKYL. Positions 120-317 constitute an ATP-grasp domain; the sequence is IAAMKKAGVP…LIKEQLRIAA (198 aa). Residue lysine 238 coordinates hydrogencarbonate. Positions 276 and 288 each coordinate ATP. The Mg(2+) site is built by glutamate 276, glutamate 288, and asparagine 290. Mn(2+)-binding residues include glutamate 276, glutamate 288, and asparagine 290. Hydrogencarbonate contacts are provided by arginine 292, valine 295, and arginine 338. The active site involves arginine 292. Arginine 338 is a biotin binding site.

In terms of assembly, acetyl-CoA carboxylase is a heterohexamer of biotin carboxyl carrier protein, biotin carboxylase and the two subunits of carboxyl transferase in a 2:2 complex. Requires Mg(2+) as cofactor. It depends on Mn(2+) as a cofactor.

The enzyme catalyses N(6)-biotinyl-L-lysyl-[protein] + hydrogencarbonate + ATP = N(6)-carboxybiotinyl-L-lysyl-[protein] + ADP + phosphate + H(+). It functions in the pathway lipid metabolism; malonyl-CoA biosynthesis; malonyl-CoA from acetyl-CoA: step 1/1. This protein is a component of the acetyl coenzyme A carboxylase complex; first, biotin carboxylase catalyzes the carboxylation of the carrier protein and then the transcarboxylase transfers the carboxyl group to form malonyl-CoA. The chain is Biotin carboxylase (accC) from Escherichia coli (strain K12).